A 608-amino-acid polypeptide reads, in one-letter code: Endo-1,4-beta-xylanase C (608 aa).

A signal peptide spans 1–25 (MKTFSVTKSSVVFAMALGMASTAFA). Residues 40 to 250 (TITSNQTGKI…VNGEVRGGHM (211 aa)) enclose the GH11 1 domain. E142 (nucleophile) is an active-site residue. E237 acts as the Proton donor in catalysis. Positions 263 to 294 (SDPVSSSSVKSSSSTDAPKSSSSKGNGNVSGK) are enriched in low complexity. A disordered region spans residues 263-296 (SDPVSSSSVKSSSSTDAPKSSSSKGNGNVSGKID). One can recognise a GH11 2 domain in the interval 316–514 (NSSVTGNVGS…GSGSFDVTYF (199 aa)). The active-site Nucleophile is the E409. Residue E501 is the Proton donor of the active site. A disordered region spans residues 520–539 (AHPLAQPEPESSSSEAKVES). The segment covering 527 to 539 (EPESSSSEAKVES) has biased composition (low complexity).

Belongs to the glycosyl hydrolase 11 (cellulase G) family.

It carries out the reaction Endohydrolysis of (1-&gt;4)-beta-D-xylosidic linkages in xylans.. It participates in glycan degradation; xylan degradation. Its function is as follows. Cleaves xylans with the production of xylose, xylobiose and xylo-oligosaccharides. The protein is Endo-1,4-beta-xylanase C (xynC) of Fibrobacter succinogenes (strain ATCC 19169 / S85).